The chain runs to 229 residues: PKHD-type hydroxylase BRADO6316 (229 aa).

Positions 78 to 180 (QIFPPLFNRY…RVASFFWLQS (103 aa)) constitute a Fe2OG dioxygenase domain. Fe cation-binding residues include His98, Asp100, and His161. Arg171 lines the 2-oxoglutarate pocket.

Fe(2+) is required as a cofactor. Requires L-ascorbate as cofactor.

This chain is PKHD-type hydroxylase BRADO6316, found in Bradyrhizobium sp. (strain ORS 278).